We begin with the raw amino-acid sequence, 256 residues long: Tryptophan synthase alpha chain (256 aa).

Catalysis depends on proton acceptor residues Glu-44 and Asp-55.

It belongs to the TrpA family. Tetramer of two alpha and two beta chains.

The catalysed reaction is (1S,2R)-1-C-(indol-3-yl)glycerol 3-phosphate + L-serine = D-glyceraldehyde 3-phosphate + L-tryptophan + H2O. It participates in amino-acid biosynthesis; L-tryptophan biosynthesis; L-tryptophan from chorismate: step 5/5. The alpha subunit is responsible for the aldol cleavage of indoleglycerol phosphate to indole and glyceraldehyde 3-phosphate. In Coxiella burnetii (strain CbuK_Q154) (Coxiella burnetii (strain Q154)), this protein is Tryptophan synthase alpha chain.